Here is a 550-residue protein sequence, read N- to C-terminus: 2-succinyl-5-enolpyruvyl-6-hydroxy-3-cyclohexene-1-carboxylate synthase (550 aa).

It belongs to the TPP enzyme family. MenD subfamily. Homodimer. It depends on Mg(2+) as a cofactor. Mn(2+) is required as a cofactor. The cofactor is thiamine diphosphate.

The enzyme catalyses isochorismate + 2-oxoglutarate + H(+) = 5-enolpyruvoyl-6-hydroxy-2-succinyl-cyclohex-3-ene-1-carboxylate + CO2. Its pathway is quinol/quinone metabolism; 1,4-dihydroxy-2-naphthoate biosynthesis; 1,4-dihydroxy-2-naphthoate from chorismate: step 2/7. It participates in quinol/quinone metabolism; menaquinone biosynthesis. Its function is as follows. Catalyzes the thiamine diphosphate-dependent decarboxylation of 2-oxoglutarate and the subsequent addition of the resulting succinic semialdehyde-thiamine pyrophosphate anion to isochorismate to yield 2-succinyl-5-enolpyruvyl-6-hydroxy-3-cyclohexene-1-carboxylate (SEPHCHC). The polypeptide is 2-succinyl-5-enolpyruvyl-6-hydroxy-3-cyclohexene-1-carboxylate synthase (Flavobacterium psychrophilum (strain ATCC 49511 / DSM 21280 / CIP 103535 / JIP02/86)).